The chain runs to 401 residues: Beta-ketoadipyl-CoA thiolase (401 aa).

The active-site Acyl-thioester intermediate is the Cys90. Residues His357 and Cys387 each act as proton acceptor in the active site.

The protein belongs to the thiolase-like superfamily. Thiolase family.

The catalysed reaction is succinyl-CoA + acetyl-CoA = 3-oxoadipyl-CoA + CoA. It functions in the pathway aromatic compound metabolism; beta-ketoadipate pathway; acetyl-CoA and succinyl-CoA from 3-oxoadipate: step 2/2. In terms of biological role, catalyzes thiolytic cleavage of beta-ketoadipyl-CoA to succinyl-CoA and acetyl-CoA. This is Beta-ketoadipyl-CoA thiolase (pcaF) from Acinetobacter baylyi (strain ATCC 33305 / BD413 / ADP1).